The primary structure comprises 231 residues: Uridylate kinase (231 aa).

6–9 (KLSG) contacts ATP. The segment at 14-19 (GEGGRG) is involved in allosteric activation by GTP. 2 residues coordinate ATP: G49 and R53. UMP contacts are provided by residues D66 and 127 to 134 (TSNPFFTT). Positions 154, 160, and 163 each coordinate ATP.

It belongs to the UMP kinase family. Homohexamer.

The protein resides in the cytoplasm. It catalyses the reaction UMP + ATP = UDP + ADP. Its pathway is pyrimidine metabolism; CTP biosynthesis via de novo pathway; UDP from UMP (UMPK route): step 1/1. Allosterically activated by GTP. Inhibited by UTP. Its function is as follows. Catalyzes the reversible phosphorylation of UMP to UDP. This is Uridylate kinase from Thermotoga maritima (strain ATCC 43589 / DSM 3109 / JCM 10099 / NBRC 100826 / MSB8).